Reading from the N-terminus, the 335-residue chain is GTPase Obg (335 aa).

Residues 1–158 form the Obg domain; it reads MFVDQITLEL…RLVELELKLI (158 aa). Residues 159-334 form the OBG-type G domain; the sequence is ADIGLVGFPN…LYDLFKSKLS (176 aa). Residues 165 to 172, 190 to 194, 215 to 218, 285 to 288, and 315 to 317 contribute to the GTP site; these read GFPNAGKS, FTTLH, DIPG, NKID, and SGL. Mg(2+)-binding residues include S172 and T192.

Belongs to the TRAFAC class OBG-HflX-like GTPase superfamily. OBG GTPase family. Monomer. Requires Mg(2+) as cofactor.

The protein resides in the cytoplasm. In terms of biological role, an essential GTPase which binds GTP, GDP and possibly (p)ppGpp with moderate affinity, with high nucleotide exchange rates and a fairly low GTP hydrolysis rate. Plays a role in control of the cell cycle, stress response, ribosome biogenesis and in those bacteria that undergo differentiation, in morphogenesis control. This Chlamydia trachomatis serovar A (strain ATCC VR-571B / DSM 19440 / HAR-13) protein is GTPase Obg.